The following is a 576-amino-acid chain: Minor capsid protein P2 (576 aa).

The segment at 13-35 (LFLYTNSIEMELLAVASIIGYGL) is hydrophobic. Residues 322-348 (TRGRPRTGDGDTEPIINPNGERDGTGS) are disordered.

In terms of assembly, interacts with the major capsid protein.

It localises to the virion. In terms of biological role, one of the minor capsid proteins that constitute a network internal to the major capsid proteins and outside the lipid membrane. The minor capsid proteins glue and stabilize the capsomers. Also acts as a molecular tape measure protein that determines the size of the viral capsid. In Chlorella (PBCV-1), this protein is Minor capsid protein P2.